The primary structure comprises 206 residues: Protein GrpE (206 aa).

Residues 1-10 show a composition bias toward basic and acidic residues; that stretch reads MTDPDLHQND. Residues 1–38 form a disordered region; it reads MTDPDLHQNDPENPAQASEPVVSKPYIMPDDPETGSAE.

It belongs to the GrpE family. Homodimer.

It localises to the cytoplasm. Its function is as follows. Participates actively in the response to hyperosmotic and heat shock by preventing the aggregation of stress-denatured proteins, in association with DnaK and GrpE. It is the nucleotide exchange factor for DnaK and may function as a thermosensor. Unfolded proteins bind initially to DnaJ; upon interaction with the DnaJ-bound protein, DnaK hydrolyzes its bound ATP, resulting in the formation of a stable complex. GrpE releases ADP from DnaK; ATP binding to DnaK triggers the release of the substrate protein, thus completing the reaction cycle. Several rounds of ATP-dependent interactions between DnaJ, DnaK and GrpE are required for fully efficient folding. The sequence is that of Protein GrpE from Bradyrhizobium sp. (strain ORS 278).